The following is a 248-amino-acid chain: 14-3-3-like protein 1 (248 aa).

Belongs to the 14-3-3 family. As to quaternary structure, interacts with daf-16 and sir-2.1. Interacts with atgl-1. Interacts with hcf-1.

Its subcellular location is the cytoplasm. It localises to the nucleus. In terms of biological role, required to modulate lifespan, in concert with hcf-1, acting redundantly with 14-3-3-like protein ftt-2. The protein is 14-3-3-like protein 1 (par-5) of Caenorhabditis elegans.